Consider the following 343-residue polypeptide: GTPase Obg (343 aa).

An Obg domain is found at 1 to 159 (MKFVDSASIF…LQLDMELKLM (159 aa)). The interval 121-144 (GHGGRGNQHFATSTNQAPRRSEPG) is disordered. A compositionally biased stretch (polar residues) spans 129–138 (HFATSTNQAP). Positions 160–323 (ADVGLVGFPN…LKDELWREVS (164 aa)) constitute an OBG-type G domain. GTP is bound by residues 166-173 (GFPNAGKS), 191-195 (FTTLV), 213-216 (DIPG), 280-283 (TKMD), and 304-306 (SSV). Positions 173 and 193 each coordinate Mg(2+). The tract at residues 322–343 (VSMRDRPEESSDPEGEGDGGTP) is disordered. Over residues 331–343 (SSDPEGEGDGGTP) the composition is skewed to acidic residues.

Belongs to the TRAFAC class OBG-HflX-like GTPase superfamily. OBG GTPase family. As to quaternary structure, monomer. It depends on Mg(2+) as a cofactor.

The protein localises to the cytoplasm. Functionally, an essential GTPase which binds GTP, GDP and possibly (p)ppGpp with moderate affinity, with high nucleotide exchange rates and a fairly low GTP hydrolysis rate. Plays a role in control of the cell cycle, stress response, ribosome biogenesis and in those bacteria that undergo differentiation, in morphogenesis control. In Chlorobium luteolum (strain DSM 273 / BCRC 81028 / 2530) (Pelodictyon luteolum), this protein is GTPase Obg.